The following is a 631-amino-acid chain: DNA mismatch repair protein MutL (631 aa).

The interval 389 to 423 (GEREASRQAGGQRVQETQMSSYGSGQSGGRGRSYA) is disordered.

It belongs to the DNA mismatch repair MutL/HexB family.

Its function is as follows. This protein is involved in the repair of mismatches in DNA. It is required for dam-dependent methyl-directed DNA mismatch repair. May act as a 'molecular matchmaker', a protein that promotes the formation of a stable complex between two or more DNA-binding proteins in an ATP-dependent manner without itself being part of a final effector complex. The chain is DNA mismatch repair protein MutL from Shewanella loihica (strain ATCC BAA-1088 / PV-4).